A 306-amino-acid chain; its full sequence is 4-diphosphocytidyl-2-C-methyl-D-erythritol kinase (306 aa).

Residue Lys-11 is part of the active site. 113-123 contacts ATP; that stretch reads PPEGGIGGGSS. Asp-153 is an active-site residue.

This sequence belongs to the GHMP kinase family. IspE subfamily.

The catalysed reaction is 4-CDP-2-C-methyl-D-erythritol + ATP = 4-CDP-2-C-methyl-D-erythritol 2-phosphate + ADP + H(+). It functions in the pathway isoprenoid biosynthesis; isopentenyl diphosphate biosynthesis via DXP pathway; isopentenyl diphosphate from 1-deoxy-D-xylulose 5-phosphate: step 3/6. Catalyzes the phosphorylation of the position 2 hydroxy group of 4-diphosphocytidyl-2C-methyl-D-erythritol. This chain is 4-diphosphocytidyl-2-C-methyl-D-erythritol kinase, found in Leptospira biflexa serovar Patoc (strain Patoc 1 / ATCC 23582 / Paris).